Here is a 283-residue protein sequence, read N- to C-terminus: Bifunctional protein FolD (283 aa).

Residues 164-166 (GRS) and Ser189 contribute to the NADP(+) site.

The protein belongs to the tetrahydrofolate dehydrogenase/cyclohydrolase family. As to quaternary structure, homodimer.

The catalysed reaction is (6R)-5,10-methylene-5,6,7,8-tetrahydrofolate + NADP(+) = (6R)-5,10-methenyltetrahydrofolate + NADPH. The enzyme catalyses (6R)-5,10-methenyltetrahydrofolate + H2O = (6R)-10-formyltetrahydrofolate + H(+). It participates in one-carbon metabolism; tetrahydrofolate interconversion. Its function is as follows. Catalyzes the oxidation of 5,10-methylenetetrahydrofolate to 5,10-methenyltetrahydrofolate and then the hydrolysis of 5,10-methenyltetrahydrofolate to 10-formyltetrahydrofolate. The chain is Bifunctional protein FolD from Lactobacillus acidophilus (strain ATCC 700396 / NCK56 / N2 / NCFM).